The sequence spans 418 residues: Argininosuccinate synthase (418 aa).

16–24 is an ATP binding site; the sequence is AYSGGLDTS. Tyrosine 95 is a binding site for L-citrulline. ATP is bound at residue glycine 125. Residues threonine 127, asparagine 131, and aspartate 132 each coordinate L-aspartate. Asparagine 131 provides a ligand contact to L-citrulline. L-citrulline is bound by residues arginine 135, serine 183, glutamate 267, and tyrosine 279.

This sequence belongs to the argininosuccinate synthase family. Type 1 subfamily. Homotetramer.

The protein localises to the cytoplasm. It catalyses the reaction L-citrulline + L-aspartate + ATP = 2-(N(omega)-L-arginino)succinate + AMP + diphosphate + H(+). Its pathway is amino-acid biosynthesis; L-arginine biosynthesis; L-arginine from L-ornithine and carbamoyl phosphate: step 2/3. The protein is Argininosuccinate synthase of Bifidobacterium adolescentis (strain ATCC 15703 / DSM 20083 / NCTC 11814 / E194a).